Reading from the N-terminus, the 213-residue chain is Orotate phosphoribosyltransferase (213 aa).

5-phospho-alpha-D-ribose 1-diphosphate is bound at residue lysine 26. 34-35 serves as a coordination point for orotate; the sequence is FF. 5-phospho-alpha-D-ribose 1-diphosphate-binding positions include 72 to 73, arginine 99, lysine 100, lysine 103, histidine 105, and 124 to 132; these read YK and DDVITAGTA. Threonine 128 and arginine 156 together coordinate orotate.

The protein belongs to the purine/pyrimidine phosphoribosyltransferase family. PyrE subfamily. In terms of assembly, homodimer. Mg(2+) serves as cofactor.

It carries out the reaction orotidine 5'-phosphate + diphosphate = orotate + 5-phospho-alpha-D-ribose 1-diphosphate. Its pathway is pyrimidine metabolism; UMP biosynthesis via de novo pathway; UMP from orotate: step 1/2. Its function is as follows. Catalyzes the transfer of a ribosyl phosphate group from 5-phosphoribose 1-diphosphate to orotate, leading to the formation of orotidine monophosphate (OMP). In Pectobacterium carotovorum subsp. carotovorum (strain PC1), this protein is Orotate phosphoribosyltransferase.